A 239-amino-acid chain; its full sequence is Octanoyltransferase (239 aa).

Positions 59–239 (PFSPQAVWLL…KRRFKLNWEK (181 aa)) constitute a BPL/LPL catalytic domain. Residues 101–108 (RGGEVTHH), 168–170 (SIG), and 181–183 (GFS) contribute to the substrate site. The Acyl-thioester intermediate role is filled by cysteine 199.

This sequence belongs to the LipB family.

The protein localises to the cytoplasm. It carries out the reaction octanoyl-[ACP] + L-lysyl-[protein] = N(6)-octanoyl-L-lysyl-[protein] + holo-[ACP] + H(+). It functions in the pathway protein modification; protein lipoylation via endogenous pathway; protein N(6)-(lipoyl)lysine from octanoyl-[acyl-carrier-protein]: step 1/2. Catalyzes the transfer of endogenously produced octanoic acid from octanoyl-acyl-carrier-protein onto the lipoyl domains of lipoate-dependent enzymes. Lipoyl-ACP can also act as a substrate although octanoyl-ACP is likely to be the physiological substrate. This is Octanoyltransferase from Prochlorococcus marinus (strain NATL2A).